A 329-amino-acid chain; its full sequence is Thioredoxin domain-containing protein 6 (329 aa).

One can recognise a Thioredoxin domain in the interval 11-115 (QVNINTQELW…QKTILQQLEA (105 aa)). The NDK stretch occupies residues 157 to 303 (GKTCTLGIIK…LFPSFKFSDK (147 aa)). A disordered region spans residues 303 to 329 (KDKEAPPGAEAQTMVGPVEDPCMSERI).

The protein belongs to the NDK family. As to quaternary structure, monomer and homodimer. As to expression, expressed in lung airway epithelium (at protein level).

Its subcellular location is the cytoplasm. The protein resides in the cytoskeleton. The protein localises to the cilium axoneme. It localises to the dynein axonemal particle. In terms of biological role, may be a regulator of microtubule physiology. This Mus musculus (Mouse) protein is Thioredoxin domain-containing protein 6.